The following is a 124-amino-acid chain: Putative membrane protein insertion efficiency factor (124 aa).

Residues 1-24 (MHDPHGHAHTVRPPGRGRNWPGPW) form a disordered region. Positions 12 to 24 (RPPGRGRNWPGPW) are enriched in low complexity.

Belongs to the UPF0161 family.

The protein localises to the cell inner membrane. Functionally, could be involved in insertion of integral membrane proteins into the membrane. The protein is Putative membrane protein insertion efficiency factor of Mesorhizobium japonicum (strain LMG 29417 / CECT 9101 / MAFF 303099) (Mesorhizobium loti (strain MAFF 303099)).